The following is an 87-amino-acid chain: RNA-binding protein Hfq (87 aa).

The region spanning 9–68 is the Sm domain; that stretch reads DPFLNALRRERIPVSIYLVNGIKLQGQIESFDQFVILLKNTVNQMVYKHAISTVVPARPV. Residues 65–87 are disordered; sequence ARPVSHHSGDRPASDRPAEKSEE. Basic and acidic residues predominate over residues 71–87; it reads HSGDRPASDRPAEKSEE.

Belongs to the Hfq family.

In terms of biological role, RNA chaperone that binds small regulatory RNA (sRNAs) and mRNAs to facilitate mRNA translational regulation in response to envelope stress, environmental stress and changes in metabolite concentrations. Also binds with high specificity to tRNAs. Essential for virulence in the suckling mouse model of cholera pathogenesis. The polypeptide is RNA-binding protein Hfq (Vibrio cholerae serotype O1 (strain ATCC 39315 / El Tor Inaba N16961)).